Reading from the N-terminus, the 1448-residue chain is ABC transporter G family member 9 (1448 aa).

Positions Glu16–Gly28 are enriched in polar residues. The disordered stretch occupies residues Glu16–Pro41. The ABC transporter 1 domain occupies Leu136 to Pro385. One can recognise an ABC transmembrane type-2 1 domain in the interval Trp490 to Cys717. 7 helical membrane-spanning segments follow: residues Phe494–Phe514, Ala530–Phe550, Ile579–Leu599, Gly604–Phe624, Leu634–Tyr654, Pro663–Ala683, and Leu748–Val768. Positions Phe822–Val1066 constitute an ABC transporter 2 domain. Gly858–Thr865 contributes to the ATP binding site. 6 helical membrane passes run Phe1157–Phe1177, Ile1191–Gln1211, Phe1233–Phe1253, Phe1272–Ile1292, Met1299–Val1319, and Ile1422–Leu1442. Positions Phe1157 to Thr1389 constitute an ABC transmembrane type-2 2 domain.

This sequence belongs to the ABC transporter superfamily. ABCG family. PDR (TC 3.A.1.205) subfamily.

It localises to the membrane. The polypeptide is ABC transporter G family member 9 (abcG9) (Dictyostelium discoideum (Social amoeba)).